A 430-amino-acid polypeptide reads, in one-letter code: Bone morphogenetic protein 7 (430 aa).

The first 29 residues, 1–29, serve as a signal peptide directing secretion; it reads MHVRSLRAAAPHSFVALWAPLFLLRSALA. The propeptide occupies 30–291; the sequence is DFSLDNEVHS…ATEVHLRSIR (262 aa). 4 N-linked (GlcNAc...) asparagine glycosylation sites follow: asparagine 186, asparagine 301, asparagine 320, and asparagine 371. Positions 290-310 are disordered; it reads IRSTGGKQRSQNRSKTPKNQE. 3 disulfide bridges follow: cysteine 329/cysteine 395, cysteine 358/cysteine 427, and cysteine 362/cysteine 429.

The protein belongs to the TGF-beta family. As to quaternary structure, homodimer; disulfide-linked. Interacts with SOSTDC1. Interacts with TWSG1. Interacts with FBN1 (via N-terminal domain) and FBN2. Interacts with type I receptor ACVR1. Interacts with type II receptor ACVR2A. Interacts with NOG; this interaction inhibits canonical BMP signaling. Interacts with SCUBE3. Interacts with ERFE; the interaction inhibits BMP-induced transcription of HAMP. Interacts with TGFBR3.

The protein localises to the secreted. Growth factor of the TGF-beta superfamily that plays important role in various biological processes, including embryogenesis, hematopoiesis, neurogenesis and skeletal morphogenesis. Initiates the canonical BMP signaling cascade by associating with type I receptor ACVR1 and type II receptor ACVR2A. Once all three components are bound together in a complex at the cell surface, ACVR2A phosphorylates and activates ACVR1. In turn, ACVR1 propagates signal by phosphorylating SMAD1/5/8 that travel to the nucleus and act as activators and repressors of transcription of target genes. For specific functions such as growth cone collapse in developing spinal neurons and chemotaxis of monocytes, also uses BMPR2 as type II receptor. Can also signal through non-canonical pathways such as P38 MAP kinase signaling cascade that promotes brown adipocyte differentiation through activation of target genes, including members of the SOX family of transcription factors. Promotes the expression of HAMP, this is repressed by its interaction with ERFE. The chain is Bone morphogenetic protein 7 (Bmp7) from Mus musculus (Mouse).